The primary structure comprises 201 residues: UPF0301 protein R00917 (201 aa).

Belongs to the UPF0301 (AlgH) family.

The chain is UPF0301 protein R00917 from Rhizobium meliloti (strain 1021) (Ensifer meliloti).